Consider the following 197-residue polypeptide: MSELLDHVASCRLPTEWGVFTMHGFEEANGQEHVALTVGNCSDGNPVLTRIHSECLTGDALFSRKCDCGPQLEAAMRAVQAEGRGIIVYLRQEGRGIGLINKIRAYHLQEQGMDTVEANLALGLPVDARDFRLAQSIYEYLGIRSVKLLTNNPEKIQTLKDAGINVVERIPLHVGENLENERYLQTKADKLGHLMSE.

50–54 (RIHSE) serves as a coordination point for GTP. Zn(2+) is bound by residues cysteine 55, cysteine 66, and cysteine 68. GTP contacts are provided by residues glutamine 71, 93–95 (EGR), and threonine 115. Residue aspartate 127 is the Proton acceptor of the active site. The Nucleophile role is filled by arginine 129. GTP-binding residues include threonine 150 and lysine 155.

This sequence belongs to the GTP cyclohydrolase II family. Zn(2+) serves as cofactor.

It carries out the reaction GTP + 4 H2O = 2,5-diamino-6-hydroxy-4-(5-phosphoribosylamino)-pyrimidine + formate + 2 phosphate + 3 H(+). It participates in cofactor biosynthesis; riboflavin biosynthesis; 5-amino-6-(D-ribitylamino)uracil from GTP: step 1/4. Catalyzes the conversion of GTP to 2,5-diamino-6-ribosylamino-4(3H)-pyrimidinone 5'-phosphate (DARP), formate and pyrophosphate. The polypeptide is GTP cyclohydrolase-2 (Neisseria gonorrhoeae (strain ATCC 700825 / FA 1090)).